A 192-amino-acid chain; its full sequence is UPF0301 protein Bphyt_0868 (192 aa).

It belongs to the UPF0301 (AlgH) family.

This Paraburkholderia phytofirmans (strain DSM 17436 / LMG 22146 / PsJN) (Burkholderia phytofirmans) protein is UPF0301 protein Bphyt_0868.